We begin with the raw amino-acid sequence, 273 residues long: Dermonecrotic toxin LhSicTox-alphaIA2avii (273 aa).

Residue His5 is part of the active site. Glu25 and Asp27 together coordinate Mg(2+). The active-site Nucleophile is the His41. Intrachain disulfides connect Cys45–Cys51 and Cys47–Cys190. Asp85 is a Mg(2+) binding site.

The protein belongs to the arthropod phospholipase D family. Class II subfamily. Mg(2+) is required as a cofactor. As to expression, expressed by the venom gland.

Its subcellular location is the secreted. It catalyses the reaction an N-(acyl)-sphingosylphosphocholine = an N-(acyl)-sphingosyl-1,3-cyclic phosphate + choline. The catalysed reaction is an N-(acyl)-sphingosylphosphoethanolamine = an N-(acyl)-sphingosyl-1,3-cyclic phosphate + ethanolamine. It carries out the reaction a 1-acyl-sn-glycero-3-phosphocholine = a 1-acyl-sn-glycero-2,3-cyclic phosphate + choline. The enzyme catalyses a 1-acyl-sn-glycero-3-phosphoethanolamine = a 1-acyl-sn-glycero-2,3-cyclic phosphate + ethanolamine. Dermonecrotic toxins cleave the phosphodiester linkage between the phosphate and headgroup of certain phospholipids (sphingolipid and lysolipid substrates), forming an alcohol (often choline) and a cyclic phosphate. This toxin acts on sphingomyelin (SM). It may also act on ceramide phosphoethanolamine (CPE), lysophosphatidylcholine (LPC) and lysophosphatidylethanolamine (LPE), but not on lysophosphatidylserine (LPS), and lysophosphatidylglycerol (LPG). It acts by transphosphatidylation, releasing exclusively cyclic phosphate products as second products. Induces dermonecrosis, hemolysis, increased vascular permeability, edema, inflammatory response, and platelet aggregation. The chain is Dermonecrotic toxin LhSicTox-alphaIA2avii from Loxosceles hirsuta (Recluse spider).